The chain runs to 320 residues: Glutaminyl-peptide cyclotransferase (320 aa).

Positions 1–12 (MATRSPYKRQTK) are enriched in basic residues. Positions 1–22 (MATRSPYKRQTKRSMIQSLPAS) are disordered. Over 1-36 (MATRSPYKRQTKRSMIQSLPASSSASSRRRFISRKR) the chain is Cytoplasmic. A helical; Signal-anchor for type II membrane protein transmembrane segment spans residues 37 to 57 (FAMMIPLALLSGAVFLFFMPF). The Lumenal segment spans residues 58-320 (NSWGQSSGSS…GNYIEQQCLV (263 aa)). N-linked (GlcNAc...) asparagine glycans are attached at residues N99 and N163.

The protein belongs to the plant glutaminyl-peptide cyclotransferase family. Glycosylated.

The protein localises to the endoplasmic reticulum membrane. The enzyme catalyses N-terminal L-glutaminyl-[peptide] = N-terminal 5-oxo-L-prolyl-[peptide] + NH4(+). Its function is as follows. Converts glutamine and N-terminal glutamyl residues in peptides to 5-oxoproline and 5-oxoproline residues. Not involved in the major pathway for 5-oxoproline production. This Arabidopsis thaliana (Mouse-ear cress) protein is Glutaminyl-peptide cyclotransferase (QCT).